The following is a 342-amino-acid chain: Pre-mRNA-splicing factor 18 (342 aa).

At M1 the chain carries N-acetylmethionine.

This sequence belongs to the PRP18 family. Heterodimer with PPIH. Interacts with PRPF4 and with the spliceosome. Part of a complex containing U4/U6 snRNPs.

The protein resides in the nucleus speckle. Participates in the second step of pre-mRNA splicing. The chain is Pre-mRNA-splicing factor 18 (Prpf18) from Mus musculus (Mouse).